The following is a 562-amino-acid chain: Phosphoglucomutase-1 (562 aa).

At methionine 1 the chain carries N-acetylmethionine. Lysine 16 carries the post-translational modification N6-acetyllysine. Arginine 23 contacts alpha-D-glucose 1,6-bisphosphate. Position 115 is a phosphothreonine (threonine 115). Alpha-D-glucose 1,6-bisphosphate is bound at residue serine 117. Residue serine 117 is the Phosphoserine intermediate of the active site. Residue serine 117 participates in Mg(2+) binding. 2 positions are modified to phosphoserine: serine 117 and serine 134. The residue at position 185 (threonine 185) is a Phosphothreonine. Serine 213 carries the phosphoserine modification. Residues aspartate 288, aspartate 290, and aspartate 292 each coordinate Mg(2+). 2 residues coordinate alpha-D-glucose 1,6-bisphosphate: aspartate 292 and arginine 293. Residue lysine 349 is modified to N6-acetyllysine. Residue tyrosine 353 is modified to Phosphotyrosine. Threonine 357 provides a ligand contact to alpha-D-glucose 1,6-bisphosphate. Serine 369 bears the Phosphoserine mark. The alpha-D-glucose 1,6-bisphosphate site is built by glutamate 376, serine 378, and lysine 389. Residue serine 378 is modified to Phosphoserine. Lysine 419 carries the N6-succinyllysine modification. Threonine 467 is subject to Phosphothreonine; by PAK1. A phosphoserine mark is found at serine 477, serine 485, and serine 505. Threonine 507 carries the phosphothreonine modification. A phosphoserine mark is found at serine 509 and serine 541.

It belongs to the phosphohexose mutase family. In terms of assembly, monomer. Mg(2+) serves as cofactor. Post-translationally, phosphorylation at Thr-467 by PAK1 significantly enhances enzymatic activity.

It localises to the cytoplasm. The catalysed reaction is alpha-D-glucose 1-phosphate = alpha-D-glucose 6-phosphate. The enzyme catalyses O-phospho-L-seryl-[protein] + alpha-D-glucose 1-phosphate = alpha-D-glucose 1,6-bisphosphate + L-seryl-[protein]. It catalyses the reaction alpha-D-glucose 1,6-bisphosphate + L-seryl-[protein] = O-phospho-L-seryl-[protein] + alpha-D-glucose 6-phosphate. Functionally, catalyzes the reversible isomerization of alpha-D-glucose 1-phosphate to alpha-D-glucose 6-phosphate. The mechanism proceeds via the intermediate compound alpha-D-glucose 1,6-bisphosphate. This enzyme participates in both the breakdown and synthesis of glucose. This Bos taurus (Bovine) protein is Phosphoglucomutase-1 (PGM1).